We begin with the raw amino-acid sequence, 449 residues long: Clusterin (449 aa).

Positions 1–21 (MKTLLLLVGLLLTLENGQVLG) are cleaved as a signal peptide. Positions 77 to 80 (KKKK) match the Nuclear localization signal motif. Asn-85 and Asn-102 each carry an N-linked (GlcNAc...) asparagine glycan. 5 cysteine pairs are disulfide-bonded: Cys-101–Cys-313, Cys-112–Cys-305, Cys-115–Cys-302, Cys-120–Cys-295, and Cys-128–Cys-285. At Ser-132 the chain carries Phosphoserine. N-linked (GlcNAc...) asparagine glycans are attached at residues Asn-144, Asn-291, Asn-328, Asn-354, and Asn-374. Ser-396 bears the Phosphoserine mark. The Nuclear localization signal motif lies at 443–447 (RQKNR).

This sequence belongs to the clusterin family. Antiparallel disulfide-linked heterodimer of an alpha chain and a beta chain. Self-associates and forms higher oligomers. Interacts with a broad range of misfolded proteins, including APP, APOC2 and LYZ. Slightly acidic pH promotes interaction with misfolded proteins. Forms high-molecular weight oligomers upon interaction with misfolded proteins. Interacts with APOA1, LRP2, CLUAP1 and PON1. Interacts with the complement membrane attack complex. Interacts (via alpha chain) with XRCC6. Interacts with SYVN1, COMMD1, BTRC, CUL1 and with ubiquitin and SCF (SKP1-CUL1-F-box protein) E3 ubiquitin-protein ligase complexes. Interacts (via alpha chain) with BAX in stressed cells, where BAX undergoes a conformation change leading to association with the mitochondrial membrane. Does not interact with BAX in unstressed cells. Found in a complex with LTF, CLU, EPPIN and SEMG1. Interacts (immaturely glycosylated pre-secreted form) with HSPA5; this interaction promotes CLU stability and facilitates stress-induced CLU retrotranslocation from the secretory pathway to the mitochondria, thereby reducing stress-induced apoptosis by stabilizing mitochondrial membrane integrity. Interacts with BCL2L1; this interaction releases and activates BAX and promotes cell death. Interacts with TGFBR2 and ACVR1. Interacts (secreted form) with STMN3; this interaction may act as an important modulator during neuronal differentiation. Interacts with VLDLR and LRP8. Proteolytically cleaved on its way through the secretory system, probably within the Golgi lumen. Proteolytic cleavage is not necessary for its chaperone activity. All non-secreted forms are not proteolytically cleaved. Chaperone activity of uncleaved forms is dependent on a non-reducing environment. Post-translationally, polyubiquitinated, leading to proteasomal degradation. Under cellular stress, the intracellular level of cleaved form is reduced due to proteasomal degradation. In terms of processing, heavily N-glycosylated. About 30% of the protein mass is comprised of complex N-linked carbohydrate. Endoplasmic reticulum (ER) stress induces changes in glycosylation status and increases level of hypoglycosylated forms. Core carbohydrates are essential for chaperone activity. Non-secreted forms are hypoglycosylated or unglycosylated.

Its subcellular location is the secreted. It is found in the nucleus. It localises to the cytoplasm. The protein resides in the mitochondrion membrane. The protein localises to the cytosol. Its subcellular location is the microsome. It is found in the endoplasmic reticulum. It localises to the mitochondrion. The protein resides in the perinuclear region. The protein localises to the cytoplasmic vesicle. Its subcellular location is the secretory vesicle. It is found in the chromaffin granule. In terms of biological role, functions as extracellular chaperone that prevents aggregation of non native proteins. Prevents stress-induced aggregation of blood plasma proteins. Inhibits formation of amyloid fibrils by APP, APOC2, B2M, CALCA, CSN3, SNCA and aggregation-prone LYZ variants (in vitro). Does not require ATP. Maintains partially unfolded proteins in a state appropriate for subsequent refolding by other chaperones, such as HSPA8/HSC70. Does not refold proteins by itself. Binding to cell surface receptors triggers internalization of the chaperone-client complex and subsequent lysosomal or proteasomal degradation. When secreted, protects cells against apoptosis and against cytolysis by complement: inhibits assembly of the complement membrane attack complex (MAC) by preventing polymerization of C9 pore component of the MAC complex. Intracellular forms interact with ubiquitin and SCF (SKP1-CUL1-F-box protein) E3 ubiquitin-protein ligase complexes and promote the ubiquitination and subsequent proteasomal degradation of target proteins. Promotes proteasomal degradation of COMMD1 and IKBKB. Modulates NF-kappa-B transcriptional activity. Following stress, promotes apoptosis. Inhibits apoptosis when associated with the mitochondrial membrane by interference with BAX-dependent release of cytochrome c into the cytoplasm. Plays a role in the regulation of cell proliferation. An intracellular form suppresses stress-induced apoptosis by stabilizing mitochondrial membrane integrity through interaction with HSPA5. Secreted form does not affect caspase or BAX-mediated intrinsic apoptosis and TNF-induced NF-kappa-B-activity. Secreted form act as an important modulator during neuronal differentiation through interaction with STMN3. Plays a role in the clearance of immune complexes that arise during cell injury. The protein is Clusterin (CLU) of Equus caballus (Horse).